The sequence spans 457 residues: Dihydrolipoyl dehydrogenase (457 aa).

FAD contacts are provided by residues 32–40 (EKEYFGGVC), Lys49, and Ala113. A disulfide bond links Cys40 and Cys45. NAD(+)-binding positions include 178–182 (GGGVI), Val235, and 262–265 (SIGR). Residues Asp303 and Ala311 each coordinate FAD. Residue His437 is the Proton acceptor of the active site.

It belongs to the class-I pyridine nucleotide-disulfide oxidoreductase family. In terms of assembly, homodimer. The cofactor is FAD.

The protein localises to the cytoplasm. The catalysed reaction is N(6)-[(R)-dihydrolipoyl]-L-lysyl-[protein] + NAD(+) = N(6)-[(R)-lipoyl]-L-lysyl-[protein] + NADH + H(+). Its function is as follows. Lipoamide dehydrogenase is a component of the alpha-ketoacid dehydrogenase complexes. This Mycoplasma pneumoniae (strain ATCC 29342 / M129 / Subtype 1) (Mycoplasmoides pneumoniae) protein is Dihydrolipoyl dehydrogenase (pdhD).